The primary structure comprises 757 residues: Polyribonucleotide nucleotidyltransferase (757 aa).

Mg(2+) contacts are provided by aspartate 531 and aspartate 537. The region spanning 597 to 656 is the KH domain; it reads PRVTTIRVPVDKIGEVIGPKGKIINAITEETGAQISIEDDGTVFVGATDGPSAQAAIDRI. Residues 668 to 737 form the S1 motif domain; that stretch reads GERFLGTVVK…KRGKISLVLV (70 aa).

It belongs to the polyribonucleotide nucleotidyltransferase family. Requires Mg(2+) as cofactor.

The protein resides in the cytoplasm. It catalyses the reaction RNA(n+1) + phosphate = RNA(n) + a ribonucleoside 5'-diphosphate. Its function is as follows. Involved in mRNA degradation. Catalyzes the phosphorolysis of single-stranded polyribonucleotides processively in the 3'- to 5'-direction. The chain is Polyribonucleotide nucleotidyltransferase from Mycolicibacterium paratuberculosis (strain ATCC BAA-968 / K-10) (Mycobacterium paratuberculosis).